Consider the following 394-residue polypeptide: Probable peptidoglycan glycosyltransferase FtsW (394 aa).

At 1–27 (MEFLQNIKKNYDEWTRITPQGLLYDRA) the chain is on the cytoplasmic side. The helical transmembrane segment at 28–48 (LFWLFVILLLIGLVAVTSASI) threads the bilayer. Topologically, residues 49–66 (PYSSRLFNDPFYFAKRDA) are periplasmic. The chain crosses the membrane as a helical span at residues 67 to 87 (IYVLLSLLTCYISLQISSSQW). The Cytoplasmic portion of the chain corresponds to 88–93 (EKWHAK). The helical transmembrane segment at 94–114 (IFLFSVILLLLVPFIGTSVNG) threads the bilayer. Over 115–120 (AKRWIS) the chain is Periplasmic. The helical transmembrane segment at 121–141 (LGILNFQPAEFAKLALTCFLA) threads the bilayer. The Cytoplasmic segment spans residues 142 to 155 (SYFTRRYDEVRSRH). Helical transmembrane passes span 156–176 (VSIFKPFIVMLVLGCFLLLQP) and 177–197 (DLGSTVVLFIIMSGMLFIVGA). Position 198 (Lys-198) is a topological domain, cytoplasmic. The helical transmembrane segment at 199 to 219 (ILQFVGLIALGGILFVWLVLT) threads the bilayer. The Periplasmic portion of the chain corresponds to 220 to 277 (ASYRLKRFIGFLEPFKEPYGTGFQLTNSLIAFGRGEITGEGLGNSIQKLDYLPEAHTD). A helical membrane pass occupies residues 278–298 (FIMAIIGEEFGFIGILIVILL). Topologically, residues 299–322 (LGLLIFRAMKIGRESLMLEQRFRG) are cytoplasmic. Residues 323-343 (FFALGIGFWIFFQGFVNLGMA) traverse the membrane as a helical segment. Topologically, residues 344–353 (LGMLPTKGLT) are periplasmic. The chain crosses the membrane as a helical span at residues 354 to 374 (FPLVSYGGSSIIIMSATIGIL). At 375–394 (LRIDHENRLFRIGQARLRDD) the chain is on the cytoplasmic side.

Belongs to the SEDS family. FtsW subfamily.

The protein resides in the cell inner membrane. It carries out the reaction [GlcNAc-(1-&gt;4)-Mur2Ac(oyl-L-Ala-gamma-D-Glu-L-Lys-D-Ala-D-Ala)](n)-di-trans,octa-cis-undecaprenyl diphosphate + beta-D-GlcNAc-(1-&gt;4)-Mur2Ac(oyl-L-Ala-gamma-D-Glu-L-Lys-D-Ala-D-Ala)-di-trans,octa-cis-undecaprenyl diphosphate = [GlcNAc-(1-&gt;4)-Mur2Ac(oyl-L-Ala-gamma-D-Glu-L-Lys-D-Ala-D-Ala)](n+1)-di-trans,octa-cis-undecaprenyl diphosphate + di-trans,octa-cis-undecaprenyl diphosphate + H(+). It participates in cell wall biogenesis; peptidoglycan biosynthesis. Its function is as follows. Peptidoglycan polymerase that is essential for cell division. The sequence is that of Probable peptidoglycan glycosyltransferase FtsW from Haemophilus influenzae (strain ATCC 51907 / DSM 11121 / KW20 / Rd).